The chain runs to 782 residues: DNA repair and recombination protein RAD54-like (782 aa).

Residues methionine 1–aspartate 20 are compositionally biased toward polar residues. Residues methionine 1–lysine 28 are disordered. The interval arginine 2–glutamine 9 is required for chromatin remodeling, strand pairing activities and coupling of ATPase activity. Threonine 22 carries the phosphothreonine modification. The Helicase ATP-binding domain occupies glutamate 168–glutamate 343. Aspartate 181–threonine 188 contacts ATP. Residues aspartate 294–histidine 297 carry the DEGH box motif. In terms of domain architecture, Helicase C-terminal spans leucine 501–threonine 658. Residues serine 741 to serine 753 show a composition bias toward polar residues. Residues serine 741–phenylalanine 782 form a disordered region. The segment covering aspartate 773–phenylalanine 782 has biased composition (acidic residues).

It belongs to the SNF2/RAD54 helicase family. In terms of assembly, interacts (via N-terminus) with spn-A/Rad51.

It is found in the nucleus. In terms of biological role, involved in mitotic DNA repair and meiotic recombination. Functions in the recombinational DNA repair pathway. Essential for interhomolog gene conversion (GC), but may have a less important role in intersister GC than spn-A/Rad51. In the presence of DNA, spn-A/Rad51 enhances the ATPase activity of okr/Rad54. This chain is DNA repair and recombination protein RAD54-like, found in Drosophila persimilis (Fruit fly).